The sequence spans 335 residues: ATP-dependent 6-phosphofructokinase (335 aa).

An ATP-binding site is contributed by Gly11. Arg21–Arg25 serves as a coordination point for ADP. Residues Arg72–Tyr73 and Gly102–Ser105 contribute to the ATP site. Asp103 is a Mg(2+) binding site. Position 125 to 127 (Thr125 to Asp127) interacts with substrate. Catalysis depends on Asp127, which acts as the Proton acceptor. Position 154 (Arg154) interacts with ADP. Substrate is bound by residues Arg162 and Met169–Arg171. ADP is bound by residues Gly185–Asp187 and Lys213–His215. Residues Glu222, Arg244, and His250–Arg253 each bind substrate.

The protein belongs to the phosphofructokinase type A (PFKA) family. ATP-dependent PFK group I subfamily. Prokaryotic clade 'B1' sub-subfamily. Homotetramer. The cofactor is Mg(2+).

The protein resides in the cytoplasm. The catalysed reaction is beta-D-fructose 6-phosphate + ATP = beta-D-fructose 1,6-bisphosphate + ADP + H(+). Its pathway is carbohydrate degradation; glycolysis; D-glyceraldehyde 3-phosphate and glycerone phosphate from D-glucose: step 3/4. Allosterically activated by ADP and other diphosphonucleosides, and allosterically inhibited by phosphoenolpyruvate. Catalyzes the phosphorylation of D-fructose 6-phosphate to fructose 1,6-bisphosphate by ATP, the first committing step of glycolysis. This Streptococcus pneumoniae (strain CGSP14) protein is ATP-dependent 6-phosphofructokinase.